Reading from the N-terminus, the 381-residue chain is MSVPSSAVRTYRITALAGDGIGPEIMQVGRAVLDAVAAQVGFSLQWQEGLIGGAAYEATGDPLPPETLKMAQESDAVYLAAVGDFKYDTLPREKRPERALLGLRAGLGLFANLRPVKIFPQLVQASSLKPEVVAGIDLVVVRELTGGIYFGQPKGIFTDAKGSRRGVNTMAYSEAEVDRIARVAFELARKRRRKLCSVDKANVLEVSQLWRERVTAIAAEYPDVELSHLYVDNAAMQLVRWPKQFDVILTENLFGDILSDEAAMLTGSIGMLPSASLGSSGPGVYEPVHGSAPDIAGQDKANPIAQVLSGAMLLRYSLDQPQAADRIEQAVEAVLAQGYRTADIYSEGMTLVGCREMGEKILAALAQQQASPQGSLSAPGG.

Positions 104, 114, 142, and 232 each coordinate substrate. Asp-232, Asp-256, and Asp-260 together coordinate Mg(2+). Residue Gly-290–Asn-302 participates in NAD(+) binding.

It belongs to the isocitrate and isopropylmalate dehydrogenases family. LeuB type 1 subfamily. Homodimer. Requires Mg(2+) as cofactor. It depends on Mn(2+) as a cofactor.

The protein localises to the cytoplasm. The enzyme catalyses (2R,3S)-3-isopropylmalate + NAD(+) = 4-methyl-2-oxopentanoate + CO2 + NADH. Its pathway is amino-acid biosynthesis; L-leucine biosynthesis; L-leucine from 3-methyl-2-oxobutanoate: step 3/4. Catalyzes the oxidation of 3-carboxy-2-hydroxy-4-methylpentanoate (3-isopropylmalate) to 3-carboxy-4-methyl-2-oxopentanoate. The product decarboxylates to 4-methyl-2 oxopentanoate. This Synechococcus sp. (strain JA-3-3Ab) (Cyanobacteria bacterium Yellowstone A-Prime) protein is 3-isopropylmalate dehydrogenase.